Reading from the N-terminus, the 816-residue chain is Molybdenum cofactor sulfurase (816 aa).

Residue K273 is modified to N6-(pyridoxal phosphate)lysine. The active site involves C427. Residues 647 to 812 (NSDSQSHSCI…IRVGEEIIPN (166 aa)) form the MOSC domain.

It belongs to the class-V pyridoxal-phosphate-dependent aminotransferase family. MOCOS subfamily. The cofactor is pyridoxal 5'-phosphate. As to expression, ubiquitously expressed.

The catalysed reaction is Mo-molybdopterin + L-cysteine + AH2 = thio-Mo-molybdopterin + L-alanine + A + H2O. It functions in the pathway cofactor biosynthesis; molybdopterin biosynthesis. Functionally, sulfurates the molybdenum cofactor. Sulfation of molybdenum is essential for xanthine dehydrogenase (XDH) and aldehyde oxidase (ADO) enzymes in which molybdenum cofactor is liganded by 1 oxygen and 1 sulfur atom in active form. The protein is Molybdenum cofactor sulfurase (FLACCA) of Solanum lycopersicum (Tomato).